The following is a 3094-amino-acid chain: Replicase polyprotein 1ab (3094 aa).

Active-site for leader protease activity residues include Cys509 and His569. Residues 622 to 647 (ARSVEKDLIDFKDEIKSLSKEKRSVT) are a coiled coil. Residues 670–857 (SFTHSVYSDH…HKLSNIKSIM (188 aa)) enclose the Alphavirus-like MT domain. The span at 1807–1816 (DSESVSSDEV) shows a compositional bias: low complexity. Positions 1807–1828 (DSESVSSDEVASNPRPGLHGGS) are disordered. The (+)RNA virus helicase ATP-binding domain occupies 2215-2387 (TQTNFVSANA…FVDDESRVYG (173 aa)). A (+)RNA virus helicase C-terminal domain is found at 2388–2548 (EVSYRCPWDV…AYRVYPTSFG (161 aa)). A RdRp catalytic domain is found at 2817–2930 (YNVGEIDFSK…FSESPIRNSA (114 aa)).

In terms of processing, the leader protease is released by autoproteolysis.

The protein localises to the host cytoplasmic vesicle membrane. The enzyme catalyses RNA(n) + a ribonucleoside 5'-triphosphate = RNA(n+1) + diphosphate. It carries out the reaction ATP + H2O = ADP + phosphate + H(+). L-pro is involved in systemic transport and in RNA amplification. In terms of biological role, RNA-dependent RNA polymerase replicates the viral genome. The protein is Replicase polyprotein 1ab of Beet yellows virus (isolate Ukraine) (BYV).